The chain runs to 997 residues: Autophagy-related protein 9 (997 aa).

Over 1-318 (MERDEYQLPN…DVYNYYLGNG (318 aa)) the chain is Cytoplasmic. Position 19 is a phosphoserine (S19). The segment covering 29–39 (VNPSLNSQEMS) has biased composition (polar residues). Residues 29–88 (VNPSLNSQEMSNFPLPDIERGSSLLHSTNDSREDVDENDLRVPESDQGTSTEEEDEVDEE) are disordered. Residues 79 to 88 (TEEEDEVDEE) are compositionally biased toward acidic residues. Glycyl lysine isopeptide (Lys-Gly) (interchain with G-Cter in ubiquitin) cross-links involve residues K113 and K121. Phosphoserine is present on S122. Disordered stretches follow at residues 127–159 (LVEGSTDDSVPKVGQLSSEEEEDNEFINNDGFD) and 214–234 (HHDKDKSANNGPRNINGNQKH). A Glycyl lysine isopeptide (Lys-Gly) (interchain with G-Cter in ubiquitin) cross-link involves residue K138. 2 positions are modified to phosphoserine: S143 and S144. Over residues 144–159 (SEEEEDNEFINNDGFD) the composition is skewed to acidic residues. Over residues 221-233 (ANNGPRNINGNQK) the composition is skewed to polar residues. The chain crosses the membrane as a helical span at residues 319 to 339 (FYCIILEKILNICTLLFVVFV). At 340–376 (STYMGHCVDYSKLPTSHRVSDIIIDKCYSNSITGFTK) the chain is on the lumenal side. A helical membrane pass occupies residues 377–397 (FFLWMFYFFVILKIVQLYFDV). The Cytoplasmic portion of the chain corresponds to 398-538 (QKLSELQNFY…EELQKRFMLA (141 aa)). The stretch at 539–559 (GFLNIILAPFLVTYFVLLYFF) is an intramembrane region. At 560 to 620 (RYFNEYKTSP…DQFPKEKTNL (61 aa)) the chain is on the cytoplasmic side. Residues 621-641 (FLKFVSFICGSFVAILAFLTV) traverse the membrane as a helical segment. At 642–656 (FDPENFLNFEITSDR) the chain is on the lumenal side. Phosphoserine is present on S657. A helical membrane pass occupies residues 657-677 (SVIFYITILGAIWSVSRNTIT). The Cytoplasmic segment spans residues 678–723 (QEYHVFDPEETLKELYEYTHYLPKEWEGRYHKEEIKLEFCKLYNLR). K701 is covalently cross-linked (Glycyl lysine isopeptide (Lys-Gly) (interchain with G-Cter in ubiquitin)). Residues 724–744 (IVILLRELTSLMITPFVLWFS) lie within the membrane without spanning it. Residues 745 to 997 (LPSSAGRIVD…EYYKKSDVGR (253 aa)) are Cytoplasmic-facing. A phosphoserine mark is found at S787 and S792. T794 carries the post-translational modification Phosphothreonine. At S802 the chain carries Phosphoserine. Position 804 is a phosphothreonine (T804). S831, S842, S864, S948, and S969 each carry phosphoserine.

Belongs to the ATG9 family. In terms of assembly, homotrimer; forms a homotrimer with a central pore that forms a path between the two membrane leaflets. Interacts with ATG23 and ATG27 to form a cycling complex for trafficking to the PAS. Interacts (via N-terminus) with ATG11, required for recruitment of ATG9 to the PAS for the Cvt pathway during nutrient-rich conditions. Interacts (via N-terminus) with ATG17; required for recruitment to the PAS during autophagy and starved conditions. Interacts with ATG2 and ATG18; required for the retrieval of ATG9 from the PAS to the cytoplasmic pool. Interacts with ATG41. Interacts with the conserved oligomeric Golgi (COG) complex subunits COG3 and COG4. Interacts with TRS85. Phosphorylated by ATG1; phosphorylation is required for autophagy and cytoplasm to vacuole transport (Cvt) vesicle formation. Phosphorylation by ATG1 regulates ATG18 interaction and preautophagosome elongation. Phosphorylation at Ser-122 is required for selective autophagy by regulating anterograde trafficking and interaction with ATG23 and ATG27. Phosphorylation at Ser-122 prevents ubiquitination by the SCF(MET30) complex. Post-translationally, ubiquitinated by the SCF(MET30) complex in normal conditions, leading to its degradation by the proteasome, thereby preventing inappropriate induction of autophagy. Ubiquitination by the SCF(MET30) complex is prevented by phosphorylation at Ser-122.

Its subcellular location is the preautophagosomal structure membrane. The protein resides in the cytoplasmic vesicle membrane. It localises to the golgi apparatus membrane. The protein localises to the endoplasmic reticulum membrane. It is found in the mitochondrion membrane. It carries out the reaction a 1,2-diacyl-sn-glycero-3-phosphocholine(in) = a 1,2-diacyl-sn-glycero-3-phosphocholine(out). The enzyme catalyses a 1,2-diacyl-sn-glycero-3-phospho-L-serine(in) = a 1,2-diacyl-sn-glycero-3-phospho-L-serine(out). It catalyses the reaction a 1,2-diacyl-sn-glycero-3-phosphoethanolamine(in) = a 1,2-diacyl-sn-glycero-3-phosphoethanolamine(out). The catalysed reaction is a 1,2-diacyl-sn-glycero-3-phospho-(1D-myo-inositol-3-phosphate)(in) = a 1,2-diacyl-sn-glycero-3-phospho-(1D-myo-inositol-3-phosphate)(out). Its function is as follows. Phospholipid scramblase involved in autophagy and cytoplasm to vacuole transport (Cvt) vesicle formation. Cycles between the preautophagosomal structure/phagophore assembly site (PAS) and the cytoplasmic vesicle pool and supplies membrane for the growing autophagosome. Lipid scramblase activity plays a key role in preautophagosomal structure/phagophore assembly by distributing the phospholipids that arrive through ATG2 from the cytoplasmic to the luminal leaflet of the bilayer, thereby driving autophagosomal membrane expansion. Required for mitophagy. Also involved in endoplasmic reticulum-specific autophagic process and is essential for the survival of cells subjected to severe ER stress. Different machineries are required for anterograde trafficking to the PAS during either the Cvt pathway or bulk autophagy and for retrograde trafficking. Recruits vesicle-tethering proteins TRS85 and YPT1 to the autophagosome formation site. Also recruits ATG23 and ATG8 to the PAS. The sequence is that of Autophagy-related protein 9 from Saccharomyces cerevisiae (strain YJM789) (Baker's yeast).